The following is a 591-amino-acid chain: MVNVTVDPLTRIEGHQRISTEVDANGVITDAQSSSLIFRGFERILQHQDPRDAAFLTQRICGVCPLSHGLTATNALDELYGVAEHVPKDALVMRNIFQGLNMVASHATHIYVLFGPDLANPAYKKVLTPLGDTGSAVWDEMLGRFAPISYKMDGAAIPAGSSYMAAIPEKKRLQEMIALIAGRMPGPSSLYPGGYTYPATVADITKLSTYYLQVMDFVSAHTLKVDFNTWIENTYKASSPTKAVNFVTEHLTDLINKSTSSNDFSKEAGWGDVEFYAAFGSELVGEKLLGLPASLKHDTIGGYQDPSKICFVAYGGYYKPTDGYDPRSPAGDRIFTSGVVSGNLEYLKFDPDKITESTAHSFYQNSVNDLPPVKGETVPFTDPEKIVYTGGSDSQYSWDKAPRYDGIAGEVGPLARMLNIKEPLVTGLALALAENGYSPANVYTRMLARMQETAILAYELLNWVTVDYEPGGKISVPLDFNAAKDSQGMGLWEAPRGALGHWISTNGSGKVANYQCIVPGSWLMSPRDSNGIPGPLEQSLIGSKINPVGEVDYTNPVGIFHMGRSYDPCISCAVHTIDLTGKCAPNTLRIL.

Glutamate 42 provides a ligand contact to Mg(2+). Residues cysteine 61, cysteine 64, cysteine 569, and cysteine 572 each coordinate Ni(2+). Fe cation is bound at residue cysteine 64. Cysteine 572 serves as a coordination point for Fe cation. Histidine 575 lines the Mg(2+) pocket.

Belongs to the [NiFe]/[NiFeSe] hydrogenase large subunit family. As to quaternary structure, composed of a large subunit (VhtA), a small subunit (VhtG) and a cytochrome subunit (VhtC). Requires Ni(2+) as cofactor. Fe cation is required as a cofactor.

The protein localises to the cell membrane. It carries out the reaction methanophenazine + H2 = dihydromethanophenazine. In terms of biological role, part of the F420 non-reducing hydrogenase II complex that catalyzes the reduction of methanophenazine to dihydromethanophenazine. This is F420 non-reducing hydrogenase II large subunit from Methanosarcina mazei (strain ATCC BAA-159 / DSM 3647 / Goe1 / Go1 / JCM 11833 / OCM 88) (Methanosarcina frisia).